The sequence spans 152 residues: Probable flagellum biosynthesis repressor protein FlbT (152 aa).

This sequence belongs to the FlbT family.

Has a post-transcriptional repressor function in flagellum biogenesis. Associates with the 5'-UTR of fljK mRNA and promotes its degradation. The protein is Probable flagellum biosynthesis repressor protein FlbT of Brucella abortus (strain S19).